The chain runs to 1449 residues: Gag-Pol polyprotein (1449 aa).

Gly2 carries the N-myristoyl glycine; by host lipid modification. The Nuclear export signal motif lies at 16-22 (LEKVRLR). The short motif at 26–32 (KKKYMLK) is the Nuclear localization signal element. Residues 215–237 (DLQHPQPGPLPAGQLREPRGSDI) are disordered. 2 consecutive CCHC-type zinc fingers follow at residues 392-409 (IKCW…QCRA) and 413-430 (QGCW…KCPE). Residues 442–494 (GKEAPQFPHGPDASGADTNCSPRGSSCGSTEELHEDGQKAEGEQRETLQGGDR) form a disordered region. The span at 457 to 470 (ADTNCSPRGSSCGS) shows a compositional bias: polar residues. The segment covering 472–487 (EELHEDGQKAEGEQRE) has biased composition (basic and acidic residues). The Peptidase A2 domain occupies 518 to 587 (VEVLLDTGAD…TPINIFGRNL (70 aa)). The active-site For protease activity; shared with dimeric partner is Asp523. Positions 641 to 831 (DGQLEEAPPT…PPFQWMGYEL (191 aa)) constitute a Reverse transcriptase domain. Positions 707, 782, and 783 each coordinate Mg(2+). Residues 824-832 (FQWMGYELW) form an RT 'primer grip' region. The Tryptophan repeat motif motif lies at 994–1010 (WEQWWTDYWQVTWIPDW). Residues 1030-1153 (IQGAETFYVD…VDHLVSQGIR (124 aa)) enclose the RNase H type-1 domain. Residues Asp1039, Glu1074, Asp1094, and Asp1145 each coordinate Mg(2+). The Integrase-type zinc finger occupies 1159 to 1200 (KKIEPAQEEHEKYHSNVKELVFKFGLPRLVAKQIVDTCDKCH). Positions 1168, 1172, 1196, and 1199 each coordinate Zn(2+). Residues 1210 to 1360 (VNAELGTWQM…TPAERLVNMI (151 aa)) enclose the Integrase catalytic domain. Mg(2+) contacts are provided by Asp1220 and Asp1272. The integrase-type DNA-binding region spans 1379–1426 (FRVYYREGRDQLWKGPGELLWKGEGAVILKVGTEIKVVPRRKAKIIKD).

In terms of assembly, homotrimer. Interacts with gp41 (via C-terminus). As to quaternary structure, homodimer. The active site consists of two apposed aspartic acid residues. Heterodimer of p66 RT and p51 RT (RT p66/p51). Heterodimerization of RT is essential for DNA polymerase activity. Despite the sequence identities, p66 RT and p51 RT have distinct folding. In terms of assembly, homotetramer; may further associate as a homohexadecamer. The cofactor is Mg(2+). In terms of processing, specific enzymatic cleavages by the viral protease yield mature proteins. The protease is released by autocatalytic cleavage. The polyprotein is cleaved during and after budding, this process is termed maturation. Proteolytic cleavage of p66 RT removes the RNase H domain to yield the p51 RT subunit. Capsid protein p24 is phosphorylated.

It localises to the virion. The protein resides in the host nucleus. It is found in the host cytoplasm. Its subcellular location is the host cell membrane. It carries out the reaction Specific for a P1 residue that is hydrophobic, and P1' variable, but often Pro.. It catalyses the reaction Endohydrolysis of RNA in RNA/DNA hybrids. Three different cleavage modes: 1. sequence-specific internal cleavage of RNA. Human immunodeficiency virus type 1 and Moloney murine leukemia virus enzymes prefer to cleave the RNA strand one nucleotide away from the RNA-DNA junction. 2. RNA 5'-end directed cleavage 13-19 nucleotides from the RNA end. 3. DNA 3'-end directed cleavage 15-20 nucleotides away from the primer terminus.. The enzyme catalyses 3'-end directed exonucleolytic cleavage of viral RNA-DNA hybrid.. The catalysed reaction is DNA(n) + a 2'-deoxyribonucleoside 5'-triphosphate = DNA(n+1) + diphosphate. Its activity is regulated as follows. The viral protease is inhibited by many synthetic protease inhibitors (PIs), such as amprenavir, atazanavir, indinavir, loprinavir, nelfinavir, ritonavir and saquinavir. RT can be inhibited either by nucleoside RT inhibitors (NRTIs) or by non nucleoside RT inhibitors (NNRTIs). NRTIs act as chain terminators, whereas NNRTIs inhibit DNA polymerization by binding a small hydrophobic pocket near the RT active site and inducing an allosteric change in this region. Classical NRTIs are abacavir, adefovir (PMEA), didanosine (ddI), lamivudine (3TC), stavudine (d4T), tenofovir (PMPA), zalcitabine (ddC), and zidovudine (AZT). Classical NNRTIs are atevirdine (BHAP U-87201E), delavirdine, efavirenz (DMP-266), emivirine (I-EBU), and nevirapine (BI-RG-587). The tritherapies used as a basic effective treatment of AIDS associate two NRTIs and one NNRTI. Use of protease inhibitors in tritherapy regimens permit more ambitious therapeutic strategies. Functionally, gag-Pol polyprotein and Gag polyprotein may regulate their own translation, by the binding genomic RNA in the 5'-UTR. At low concentration, Gag-Pol and Gag would promote translation, whereas at high concentration, the polyproteins encapsidate genomic RNA and then shut off translation. In terms of biological role, matrix protein p17 has two main functions: in infected cell, it targets Gag and Gag-pol polyproteins to the plasma membrane via a multipartite membrane-binding signal, that includes its myristointegration complex. The myristoylation signal and the NLS exert conflicting influences its subcellular localization. The key regulation of these motifs might be phosphorylation of a portion of MA molecules on the C-terminal tyrosine at the time of virus maturation, by virion-associated cellular tyrosine kinase. Implicated in the release from host cell mediated by Vpu. Its function is as follows. Capsid protein p24 forms the conical core that encapsulates the genomic RNA-nucleocapsid complex in the virion. The core is constituted by capsid protein hexamer subunits. The core is disassembled soon after virion entry. Interaction with host PPIA/CYPA protects the virus from restriction by host TRIM5-alpha and from an unknown antiviral activity in host cells. This capsid restriction by TRIM5 is one of the factors which restricts SIV to the simian species. Nucleocapsid protein p7 encapsulates and protects viral dimeric unspliced (genomic) RNA. Binds these RNAs through its zinc fingers. Facilitates rearangement of nucleic acid secondary structure during retrotranscription of genomic RNA. This capability is referred to as nucleic acid chaperone activity. Functionally, the aspartyl protease mediates proteolytic cleavages of Gag and Gag-Pol polyproteins during or shortly after the release of the virion from the plasma membrane. Cleavages take place as an ordered, step-wise cascade to yield mature proteins. This process is called maturation. Displays maximal activity during the budding process just prior to particle release from the cell. Also cleaves Nef and Vif, probably concomitantly with viral structural proteins on maturation of virus particles. Hydrolyzes host EIF4GI and PABP1 in order to shut off the capped cellular mRNA translation. The resulting inhibition of cellular protein synthesis serves to ensure maximal viral gene expression and to evade host immune response. In terms of biological role, reverse transcriptase/ribonuclease H (RT) is a multifunctional enzyme that converts the viral dimeric RNA genome into dsDNA in the cytoplasm, shortly after virus entry into the cell. This enzyme displays a DNA polymerase activity that can copy either DNA or RNA templates, and a ribonuclease H (RNase H) activity that cleaves the RNA strand of RNA-DNA heteroduplexes in a partially processive 3' to 5' endonucleasic mode. Conversion of viral genomic RNA into dsDNA requires many steps. A tRNA binds to the primer-binding site (PBS) situated at the 5'-end of the viral RNA. RT uses the 3' end of the tRNA primer to perform a short round of RNA-dependent minus-strand DNA synthesis. The reading proceeds through the U5 region and ends after the repeated (R) region which is present at both ends of viral RNA. The portion of the RNA-DNA heteroduplex is digested by the RNase H, resulting in a ssDNA product attached to the tRNA primer. This ssDNA/tRNA hybridizes with the identical R region situated at the 3' end of viral RNA. This template exchange, known as minus-strand DNA strong stop transfer, can be either intra- or intermolecular. RT uses the 3' end of this newly synthesized short ssDNA to perform the RNA-dependent minus-strand DNA synthesis of the whole template. RNase H digests the RNA template except for two polypurine tracts (PPTs) situated at the 5'-end and near the center of the genome. It is not clear if both polymerase and RNase H activities are simultaneous. RNase H can probably proceed both in a polymerase-dependent (RNA cut into small fragments by the same RT performing DNA synthesis) and a polymerase-independent mode (cleavage of remaining RNA fragments by free RTs). Secondly, RT performs DNA-directed plus-strand DNA synthesis using the PPTs that have not been removed by RNase H as primers. PPTs and tRNA primers are then removed by RNase H. The 3' and 5' ssDNA PBS regions hybridize to form a circular dsDNA intermediate. Strand displacement synthesis by RT to the PBS and PPT ends produces a blunt ended, linear dsDNA copy of the viral genome that includes long terminal repeats (LTRs) at both ends. Its function is as follows. Integrase catalyzes viral DNA integration into the host chromosome, by performing a series of DNA cutting and joining reactions. This enzyme activity takes place after virion entry into a cell and reverse transcription of the RNA genome in dsDNA. The first step in the integration process is 3' processing. This step requires a complex comprising the viral genome, matrix protein, Vpr and integrase. This complex is called the pre-integration complex (PIC). The integrase protein removes 2 nucleotides from each 3' end of the viral DNA, leaving recessed CA OH's at the 3' ends. In the second step, the PIC enters cell nucleus. This process is mediated through integrase and Vpr proteins, and allows the virus to infect a non dividing cell. This ability to enter the nucleus is specific of lentiviruses, other retroviruses cannot and rely on cell division to access cell chromosomes. In the third step, termed strand transfer, the integrase protein joins the previously processed 3' ends to the 5' ends of strands of target cellular DNA at the site of integration. The 5'-ends are produced by integrase-catalyzed staggered cuts, 5 bp apart. A Y-shaped, gapped, recombination intermediate results, with the 5'-ends of the viral DNA strands and the 3' ends of target DNA strands remaining unjoined, flanking a gap of 5 bp. The last step is viral DNA integration into host chromosome. This involves host DNA repair synthesis in which the 5 bp gaps between the unjoined strands are filled in and then ligated. Since this process occurs at both cuts flanking the SIV genome, a 5 bp duplication of host DNA is produced at the ends of SIV integration. Alternatively, Integrase may catalyze the excision of viral DNA just after strand transfer, this is termed disintegration. In Cercopithecidae (Old World monkeys), this protein is Gag-Pol polyprotein (gag-pol).